The primary structure comprises 203 residues: Endothelin-1 (203 aa).

Positions 1 to 25 (MDYFPMIIALLFVAFQGAPETAVLG) are cleaved as a signal peptide. The propeptide occupies 26–50 (AELSPEAESQGETPSPHASWRPRRS). Residues 27 to 48 (ELSPEAESQGETPSPHASWRPR) form a disordered region. 2 disulfides stabilise this stretch: C53–C67 and C55–C63. Positions 83-203 (YGLGSPSRSR…DKKVTHNRTH (121 aa)) are excised as a propeptide. The tract at residues 110 to 124 (CQCASQKDKKCWSFC) is endothelin-like. N-linked (GlcNAc...) asparagine glycosylation occurs at N200.

It belongs to the endothelin/sarafotoxin family.

It localises to the secreted. Functionally, endothelins are endothelium-derived vasoconstrictor peptides. Probable ligand for G-protein coupled receptors EDNRA and EDNRB which activates PTK2B, BCAR1, BCAR3 and, GTPases RAP1 and RHOA cascade in glomerular mesangial cells. Also binds the DEAR/FBXW7-AS1 receptor. Promotes mesenteric arterial wall remodeling via activation of ROCK signaling and subsequent colocalization of NFATC3 with F-actin filaments. NFATC3 then translocates to the nucleus where it subsequently promotes the transcription of the smooth muscle hypertrophy and differentiation marker ACTA2. The sequence is that of Endothelin-1 (EDN1) from Sus scrofa (Pig).